A 250-amino-acid polypeptide reads, in one-letter code: MIGGLFLNTLSFVIVSNHVVNNTANVHHIQQEHVIVQQTQIVSARTQNYYPEFSIAVLFVSFLALYRSTNFKTCVGILMFKIVSMTLIGPMLTAYGYYIDGIVTTTVLALRFIYLSYFWYVNNRFEFVLYNTTTLMFVHGRAAPFMRSSHSSIYVTLYGGINYMFVNDLTLHFVDPMLVSIAIRGLAHADLTVVRAVELLNGDFIYVFSQEPVVGVYNAAFSQAVLNEIDLKEEVEDHVYDVPSGINCHR.

One can recognise a CoV 3a-like viroporin TM domain in the interval 40–130 (QIVSARTQNY…VNNRFEFVLY (91 aa)). 3 helical membrane-spanning segments follow: residues 46–66 (TQNYYPEFSIAVLFVSFLALY), 75–95 (VGILMFKIVSMTLIGPMLTAY), and 101–121 (GIVTTTVLALRFIYLSYFWYV). The 80-residue stretch at 134–213 (TLMFVHGRAA…FIYVFSQEPV (80 aa)) folds into the CoV 3a-like viroporin CD domain.

This sequence belongs to the coronaviruses NS3b protein family.

It localises to the host membrane. Functionally, may be a virulence factor. This chain is Non-structural protein 3b, found in Canine coronavirus (strain BGF10) (CCoV).